The primary structure comprises 308 residues: Aspartate carbamoyltransferase catalytic subunit (308 aa).

The carbamoyl phosphate site is built by arginine 57 and threonine 58. Lysine 86 provides a ligand contact to L-aspartate. Residues arginine 107, histidine 135, and glutamine 138 each coordinate carbamoyl phosphate. Residues arginine 168 and arginine 228 each coordinate L-aspartate. Residues leucine 267 and proline 268 each coordinate carbamoyl phosphate.

This sequence belongs to the aspartate/ornithine carbamoyltransferase superfamily. ATCase family. As to quaternary structure, heterododecamer (2C3:3R2) of six catalytic PyrB chains organized as two trimers (C3), and six regulatory PyrI chains organized as three dimers (R2).

It carries out the reaction carbamoyl phosphate + L-aspartate = N-carbamoyl-L-aspartate + phosphate + H(+). It functions in the pathway pyrimidine metabolism; UMP biosynthesis via de novo pathway; (S)-dihydroorotate from bicarbonate: step 2/3. In terms of biological role, catalyzes the condensation of carbamoyl phosphate and aspartate to form carbamoyl aspartate and inorganic phosphate, the committed step in the de novo pyrimidine nucleotide biosynthesis pathway. The sequence is that of Aspartate carbamoyltransferase catalytic subunit from Leptospira borgpetersenii serovar Hardjo-bovis (strain JB197).